The sequence spans 253 residues: Probable transcriptional regulatory protein Synpcc7942_1017 (253 aa).

It belongs to the TACO1 family.

It is found in the cytoplasm. This is Probable transcriptional regulatory protein Synpcc7942_1017 from Synechococcus elongatus (strain ATCC 33912 / PCC 7942 / FACHB-805) (Anacystis nidulans R2).